A 160-amino-acid polypeptide reads, in one-letter code: 6,7-dimethyl-8-ribityllumazine synthase (160 aa).

Residues Trp-28, 59–61, and 82–84 contribute to the 5-amino-6-(D-ribitylamino)uracil site; these read SFE and VII. Residue 87 to 88 participates in (2S)-2-hydroxy-3-oxobutyl phosphate binding; sequence GT. The active-site Proton donor is the His-90. Phe-115 lines the 5-amino-6-(D-ribitylamino)uracil pocket. Arg-129 serves as a coordination point for (2S)-2-hydroxy-3-oxobutyl phosphate.

It belongs to the DMRL synthase family.

It carries out the reaction (2S)-2-hydroxy-3-oxobutyl phosphate + 5-amino-6-(D-ribitylamino)uracil = 6,7-dimethyl-8-(1-D-ribityl)lumazine + phosphate + 2 H2O + H(+). The protein operates within cofactor biosynthesis; riboflavin biosynthesis; riboflavin from 2-hydroxy-3-oxobutyl phosphate and 5-amino-6-(D-ribitylamino)uracil: step 1/2. In terms of biological role, catalyzes the formation of 6,7-dimethyl-8-ribityllumazine by condensation of 5-amino-6-(D-ribitylamino)uracil with 3,4-dihydroxy-2-butanone 4-phosphate. This is the penultimate step in the biosynthesis of riboflavin. The polypeptide is 6,7-dimethyl-8-ribityllumazine synthase (Clavibacter sepedonicus (Clavibacter michiganensis subsp. sepedonicus)).